Here is a 1616-residue protein sequence, read N- to C-terminus: DNA (cytosine-5)-methyltransferase 1 (1616 aa).

Positions 1–120 (MPARTAPARV…NQARSEARRV (120 aa)) are interaction with DMAP1. The interaction with DNMT3A stretch occupies residues 1-148 (MPARTAPARV…RRSKSDGEAK (148 aa)). Interaction with the PRC2/EED-EZH2 complex regions lie at residues 1 to 336 (MPAR…TEKK) and 308 to 606 (NPQI…TIRH). The 94-residue stretch at 16–109 (PAISLPDDVR…NREVNGRLEN (94 aa)) folds into the DMAP1-binding domain. K70 is modified (N6,N6-dimethyllysine). The interval 103-349 (VNGRLENGNQ…AKTVMNSKTH (247 aa)) is disordered. A phosphoserine mark is found at S127 and S133. A Phosphothreonine modification is found at T137. S141 is subject to Phosphoserine. K142 is subject to N6-methyllysine; by SETD7. A Phosphoserine; by PKB/AKT1 modification is found at S143. The interval 149 to 217 (PEPSPSPRIT…TSRERVARPL (69 aa)) is interaction with DNMT3B. Phosphoserine is present on residues S152 and S154. K160 carries the post-translational modification N6-acetyllysine. The tract at residues 163 to 174 (RQTTITSHFAKG) is interaction with PCNA. Position 166 is a phosphothreonine (T166). N6-acetyllysine occurs at positions 173 and 188. The short motif at 177–205 (KRKPQEESERAKSDESIKEEDKDQDEKRR) is the Nuclear localization signal element. 3 stretches are compositionally biased toward basic and acidic residues: residues 179-214 (KPQEESERAKSDESIKEEDKDQDEKRRRVTSRERVA), 221-267 (EPER…REAR), and 281-306 (KDEKKHRSQPKDLAAKRRPEEKEPEK). An N6-acetyllysine; alternate modification is found at K259. K259 is covalently cross-linked (Glycyl lysine isopeptide (Lys-Gly) (interchain with G-Cter in SUMO2); alternate). The segment at 310–502 (QISDEKDEDE…PEYAPIFGLM (193 aa)) is homodimerization. S312 carries the phosphoserine modification. Positions 321 to 337 (EEKRRKTTPKEPTEKKM) are enriched in basic and acidic residues. The interval 331 to 550 (EPTEKKMARA…NLNRFTEDSL (220 aa)) is DNA replication foci-targeting sequence. C353 and C356 together coordinate Zn(2+). Residue K366 is modified to N6-acetyllysine. 2 positions are modified to phosphoserine: S394 and S398. 2 residues coordinate Zn(2+): C414 and H418. 2 positions are modified to phosphoserine: S509 and S549. The CXXC-type zinc-finger motif lies at 646–692 (NAFKRRRCGVCEVCQQPECGKCKACKDMVKFGGSGRSKQACQERRCP). Residues 651–697 (RRCGVCEVCQQPECGKCKACKDMVKFGGSGRSKQACQERRCPNMAMK) form a required for activity region. 8 residues coordinate Zn(2+): C653, C656, C659, C664, C667, C670, C686, and C691. The autoinhibitory linker stretch occupies residues 693–754 (NMAMKEADDD…SYYKKVCIDA (62 aa)). Over residues 699-709 (ADDDEEVDDNI) the composition is skewed to acidic residues. The segment at 699 to 729 (ADDDEEVDDNIPEMPSPKKMHQGKKKKQNKN) is disordered. Phosphoserine is present on S714. Basic residues predominate over residues 716–728 (KKMHQGKKKKQNK). A Phosphoserine modification is found at S732. K749 carries the post-translational modification N6-acetyllysine. The BAH 1 domain occupies 755–880 (ETLEVGDCVS…QDYARFESPP (126 aa)). A Phosphoserine modification is found at S878. 5 positions are modified to N6-acetyllysine: K891, K957, K961, K975, and K1054. The BAH 2 domain maps to 972-1100 (HYRKYSDYIK…AKSKSFEDPP (129 aa)). The segment at 1095–1130 (SFEDPPNHARSPGNKGKGKGKGKGKPKSQACEPSEP) is disordered. 5 repeat units span residues 1109-1110 (KG), 1111-1112 (KG), 1113-1114 (KG), 1115-1116 (KG), and 1117-1118 (KG). Residues 1109–1120 (KGKGKGKGKGKP) form a 6 X 2 AA tandem repeats of K-G region. Basic residues predominate over residues 1110–1120 (GKGKGKGKGKP). An N6-acetyllysine mark is found at K1111, K1113, and K1115. N6-acetyllysine; by EHMT2 is present on K1117. 2 positions are modified to N6-acetyllysine: K1119 and K1121. The stretch at 1119–1120 (KP) is one 6; approximate repeat. An interaction with the PRC2/EED-EZH2 complex region spans residues 1121 to 1616 (KSQACEPSEP…KIKEEEAAKD (496 aa)). Positions 1139–1599 (LRTLDVFSGC…LEIKLCMLAK (461 aa)) constitute an SAM-dependent MTase C5-type domain. The interval 1139–1616 (LRTLDVFSGC…KIKEEEAAKD (478 aa)) is catalytic. S-adenosyl-L-methionine contacts are provided by residues S1146, 1150–1151 (GL), 1168–1169 (EM), 1190–1191 (DC), and C1191. The active site involves C1226. N6-acetyllysine is present on residues K1349 and K1415. 2 residues coordinate S-adenosyl-L-methionine: N1578 and V1580. Residue K1609 forms a Glycyl lysine isopeptide (Lys-Gly) (interchain with G-Cter in SUMO2) linkage.

This sequence belongs to the class I-like SAM-binding methyltransferase superfamily. C5-methyltransferase family. Homodimer. Forms a stable complex with E2F1, BB1 and HDAC1. Forms a complex with DMAP1 and HDAC2, with direct interaction. Interacts with the PRC2/EED-EZH2 complex. Probably part of a corepressor complex containing ZNF304, TRIM28, SETDB1 and DNMT1. Interacts with UHRF1; promoting its recruitment to hemimethylated DNA. Interacts with USP7, promoting its deubiquitination. Interacts with PCNA. Interacts with MBD2 and MBD3. Interacts with DNMT3A and DNMT3B. Interacts with UBC9. Interacts with CSNK1D. Interacts with HDAC1. Interacts with BAZ2A/TIP5. Interacts with SIRT7. Interacts with ZNF263; recruited to the SIX3 promoter along with other proteins involved in chromatin modification and transcriptional corepression where it contributes to transcriptional repression. Interacts with L3MBTL3 and DCAF5; the interaction requires DNMT1 methylation at Lys-142 and is necessary to target DNMT1 for ubiquitination by the CRL4-DCAF5 E3 ubiquitin ligase complex and proteasomal degradation. Interacts with PHF20L1; the interaction requires DNMT1 methylation at Lys-142 and protects DNMT1 from ubiquitination and proteasomal degradation. Post-translationally, sumoylated; sumoylation increases activity. Acetylation on multiple lysines, mainly by KAT2B/PCAF, regulates cell cycle G(2)/M transition. Deacetylation of Lys-1349 and Lys-1415 by SIRT1 increases methyltransferase activity. In terms of processing, phosphorylation of Ser-154 by CDKs is important for enzymatic activity and protein stability. Phosphorylation of Ser-143 by AKT1 prevents methylation by SETD7 thereby increasing DNMT1 stability. Post-translationally, methylation at Lys-142 by SETD7 is necessary for the regulation of DNMT1 proteasomal degradation. Ubiquitinated by UHRF1; interaction with USP7 counteracts ubiquitination by UHRF1 by promoting deubiquitination and preventing degradation by the proteasome. In terms of tissue distribution, ubiquitous; highly expressed in fetal tissues, heart, kidney, placenta, peripheral blood mononuclear cells, and expressed at lower levels in spleen, lung, brain, small intestine, colon, liver, and skeletal muscle. Isoform 2 is less expressed than isoform 1.

It is found in the nucleus. It catalyses the reaction a 2'-deoxycytidine in DNA + S-adenosyl-L-methionine = a 5-methyl-2'-deoxycytidine in DNA + S-adenosyl-L-homocysteine + H(+). Functionally, methylates CpG residues. Preferentially methylates hemimethylated DNA. Associates with DNA replication sites in S phase maintaining the methylation pattern in the newly synthesized strand, that is essential for epigenetic inheritance. Associates with chromatin during G2 and M phases to maintain DNA methylation independently of replication. It is responsible for maintaining methylation patterns established in development. DNA methylation is coordinated with methylation of histones. Mediates transcriptional repression by direct binding to HDAC2. In association with DNMT3B and via the recruitment of CTCFL/BORIS, involved in activation of BAG1 gene expression by modulating dimethylation of promoter histone H3 at H3K4 and H3K9. Probably forms a corepressor complex required for activated KRAS-mediated promoter hypermethylation and transcriptional silencing of tumor suppressor genes (TSGs) or other tumor-related genes in colorectal cancer (CRC) cells. Also required to maintain a transcriptionally repressive state of genes in undifferentiated embryonic stem cells (ESCs). Associates at promoter regions of tumor suppressor genes (TSGs) leading to their gene silencing. Promotes tumor growth. The chain is DNA (cytosine-5)-methyltransferase 1 (DNMT1) from Homo sapiens (Human).